The chain runs to 88 residues: Small ribosomal subunit protein bS16c (88 aa).

The protein belongs to the bacterial ribosomal protein bS16 family.

It is found in the plastid. Its subcellular location is the chloroplast. The sequence is that of Small ribosomal subunit protein bS16c from Lactuca sativa (Garden lettuce).